A 602-amino-acid polypeptide reads, in one-letter code: T-box transcription factor TBX15 (602 aa).

The disordered stretch occupies residues 43-95 (SMEALSPAGPLGDTDDPATHGLEPHPDSEQSTGSDSEVLTERTSCSFSTHTDL). Polar residues predominate over residues 71–94 (EQSTGSDSEVLTERTSCSFSTHTD). Positions 122–304 (LWKRFHDIGT…RNPFAKGFRD (183 aa)) form a DNA-binding region, T-box. Residue Thr330 is modified to Phosphothreonine. Disordered regions lie at residues 338-369 (QKQQ…LSPS) and 425-444 (QSGT…QRTP). Residues 346-369 (GTSPTTSSTGTPSPSASSHLLSPS) show a composition bias toward low complexity.

In terms of assembly, can form a heterodimer with TBX18.

Its subcellular location is the nucleus. Its function is as follows. Probable transcriptional regulator involved in the development of the skeleton of the limb, vertebral column and head. Acts by controlling the number of mesenchymal precursor cells and chondrocytes. The sequence is that of T-box transcription factor TBX15 (Tbx15) from Mus musculus (Mouse).